A 574-amino-acid polypeptide reads, in one-letter code: Craniofacial development protein 2 (574 aa).

5 stretches are compositionally biased toward basic and acidic residues: residues 1 to 16 (MEEVDSKDISSSKAED), 23 to 37 (ECHEEAVDELMKEDE), 45 to 55 (EQTKGIKRKAE), 86 to 111 (SEKEDAATEQEKGVESEDARKKKEDE), and 134 to 172 (TGEETEETRSGEEQEKPKEMQEVKLTKSLVEEVRCDRQQ). 2 disordered regions span residues 1–222 (MEEV…PAVD) and 488–574 (TRPF…SGVF). Residues 199–208 (KTGTNASSKN) show a composition bias toward polar residues. Positions 493 to 572 (GTNEADDTSE…AVPSLPAGSG (80 aa)) are hydrophilic. Positions 502–516 (EESKPSSEQKGKEKP) are enriched in basic and acidic residues. Low complexity predominate over residues 518–528 (ASVPSAVSSVP).

It is found in the cytoplasm. The protein localises to the nucleus. The chain is Craniofacial development protein 2 (CFDP2) from Tragulus javanicus (Lesser Malay chevrotain).